The primary structure comprises 61 residues: DNA gyrase inhibitor YacG (61 aa).

C14, C17, C29, and C33 together coordinate Zn(2+).

This sequence belongs to the DNA gyrase inhibitor YacG family. Interacts with GyrB. Requires Zn(2+) as cofactor.

Inhibits all the catalytic activities of DNA gyrase by preventing its interaction with DNA. Acts by binding directly to the C-terminal domain of GyrB, which probably disrupts DNA binding by the gyrase. This Zymomonas mobilis subsp. mobilis (strain ATCC 31821 / ZM4 / CP4) protein is DNA gyrase inhibitor YacG.